Here is a 467-residue protein sequence, read N- to C-terminus: DNA polymerase IV (467 aa).

The UmuC domain maps to 5 to 187; that stretch reads VLHIDMDAFF…LPVGALWGVG (183 aa). Mg(2+) contacts are provided by aspartate 9 and aspartate 104. Glutamate 105 is an active-site residue. Disordered stretches follow at residues 364 to 383 and 429 to 449; these read PDTD…STQV and KGRT…DPLD.

This sequence belongs to the DNA polymerase type-Y family. In terms of assembly, monomer. It depends on Mg(2+) as a cofactor.

It localises to the cytoplasm. The enzyme catalyses DNA(n) + a 2'-deoxyribonucleoside 5'-triphosphate = DNA(n+1) + diphosphate. Functionally, poorly processive, error-prone DNA polymerase involved in untargeted mutagenesis. Copies undamaged DNA at stalled replication forks, which arise in vivo from mismatched or misaligned primer ends. These misaligned primers can be extended by PolIV. Exhibits no 3'-5' exonuclease (proofreading) activity. May be involved in translesional synthesis, in conjunction with the beta clamp from PolIII. This is DNA polymerase IV from Corynebacterium glutamicum (strain ATCC 13032 / DSM 20300 / JCM 1318 / BCRC 11384 / CCUG 27702 / LMG 3730 / NBRC 12168 / NCIMB 10025 / NRRL B-2784 / 534).